Reading from the N-terminus, the 186-residue chain is Sec-independent protein translocase protein TatB (186 aa).

The helical transmembrane segment at 1 to 21 (MFDIGFSELILLMVLGLVVLG) threads the bilayer. A disordered region spans residues 120–186 (NAEKSQNAIS…SKSQSSKTKS (67 aa)). The segment covering 177 to 186 (SKSQSSKTKS) has biased composition (polar residues).

It belongs to the TatB family. In terms of assembly, the Tat system comprises two distinct complexes: a TatABC complex, containing multiple copies of TatA, TatB and TatC subunits, and a separate TatA complex, containing only TatA subunits. Substrates initially bind to the TatABC complex, which probably triggers association of the separate TatA complex to form the active translocon.

It localises to the cell inner membrane. Part of the twin-arginine translocation (Tat) system that transports large folded proteins containing a characteristic twin-arginine motif in their signal peptide across membranes. Together with TatC, TatB is part of a receptor directly interacting with Tat signal peptides. TatB may form an oligomeric binding site that transiently accommodates folded Tat precursor proteins before their translocation. In Haemophilus influenzae (strain ATCC 51907 / DSM 11121 / KW20 / Rd), this protein is Sec-independent protein translocase protein TatB.